A 370-amino-acid chain; its full sequence is 4-hydroxy-3-methylbut-2-en-1-yl diphosphate synthase (flavodoxin) (370 aa).

Residues Cys270, Cys273, Cys305, and Glu312 each coordinate [4Fe-4S] cluster.

It belongs to the IspG family. [4Fe-4S] cluster is required as a cofactor.

It carries out the reaction (2E)-4-hydroxy-3-methylbut-2-enyl diphosphate + oxidized [flavodoxin] + H2O + 2 H(+) = 2-C-methyl-D-erythritol 2,4-cyclic diphosphate + reduced [flavodoxin]. It functions in the pathway isoprenoid biosynthesis; isopentenyl diphosphate biosynthesis via DXP pathway; isopentenyl diphosphate from 1-deoxy-D-xylulose 5-phosphate: step 5/6. Converts 2C-methyl-D-erythritol 2,4-cyclodiphosphate (ME-2,4cPP) into 1-hydroxy-2-methyl-2-(E)-butenyl 4-diphosphate. In Marinomonas sp. (strain MWYL1), this protein is 4-hydroxy-3-methylbut-2-en-1-yl diphosphate synthase (flavodoxin).